Consider the following 360-residue polypeptide: Outer mitochondrial transmembrane helix translocase (360 aa).

The Mitochondrial intermembrane portion of the chain corresponds to 1–15 (MVHGEAFSRPLSRNE). Residues 16-34 (VVGLIFRLTIFGAVTYFTI) form a helical membrane-spanning segment. Residues 35–360 (KWMVDAIDPT…QNVLMHVSLD (326 aa)) lie on the Cytoplasmic side of the membrane. 133–140 (GPPGCGKT) is a binding site for ATP.

Belongs to the AAA ATPase family. MSP1 subfamily.

It is found in the mitochondrion outer membrane. Its subcellular location is the peroxisome membrane. The protein localises to the postsynaptic cell membrane. It carries out the reaction [protein]-with a C-terminal TM segment(out) + ATP + H2O = [protein]-with a C-terminal TM segment(in) + ADP + phosphate + H(+). Functionally, outer mitochondrial translocase required to remove mislocalized tail-anchored transmembrane proteins on mitochondria. Specifically recognizes and binds tail-anchored transmembrane proteins: acts as a dislocase that mediates the ATP-dependent extraction of mistargeted tail-anchored transmembrane proteins from the mitochondrion outer membrane. Also plays a critical role in regulating the surface expression of AMPA receptors (AMPAR), thereby regulating synaptic plasticity and learning and memory. The protein is Outer mitochondrial transmembrane helix translocase of Xenopus tropicalis (Western clawed frog).